The primary structure comprises 382 residues: Succinate--CoA ligase [ADP-forming] subunit beta (382 aa).

An ATP-grasp domain is found at lysine 9–glutamate 240. Positions 46, 98, 101, and 106 each coordinate ATP. Asparagine 195 and aspartate 209 together coordinate Mg(2+). Substrate contacts are provided by residues asparagine 260 and glycine 317–leucine 319.

The protein belongs to the succinate/malate CoA ligase beta subunit family. Heterotetramer of two alpha and two beta subunits. Mg(2+) serves as cofactor.

The catalysed reaction is succinate + ATP + CoA = succinyl-CoA + ADP + phosphate. It catalyses the reaction GTP + succinate + CoA = succinyl-CoA + GDP + phosphate. It functions in the pathway carbohydrate metabolism; tricarboxylic acid cycle; succinate from succinyl-CoA (ligase route): step 1/1. In terms of biological role, succinyl-CoA synthetase functions in the citric acid cycle (TCA), coupling the hydrolysis of succinyl-CoA to the synthesis of either ATP or GTP and thus represents the only step of substrate-level phosphorylation in the TCA. The beta subunit provides nucleotide specificity of the enzyme and binds the substrate succinate, while the binding sites for coenzyme A and phosphate are found in the alpha subunit. This chain is Succinate--CoA ligase [ADP-forming] subunit beta, found in Hydrogenobaculum sp. (strain Y04AAS1).